A 664-amino-acid polypeptide reads, in one-letter code: Type IV inositol polyphosphate 5-phosphatase 3 (664 aa).

A disordered region spans residues 35 to 76 (GRDPEYGADTDNESENEDAREDNDDSSSDEEGGSGSRGRESK). Residues 40–66 (YGADTDNESENEDAREDNDDSSSDEEG) are compositionally biased toward acidic residues. Catalytic stretches follow at residues 514-529 (ERIIWLGDLNYRLSSS) and 592-607 (PKRTPAWCDRVLSYGK).

Belongs to the inositol polyphosphate 5-phosphatase family.

The catalysed reaction is a 1,2-diacyl-sn-glycero-3-phospho-(1D-myo-inositol-4,5-bisphosphate) + H2O = a 1,2-diacyl-sn-glycero-3-phospho-(1D-myo-inositol 4-phosphate) + phosphate. It catalyses the reaction a 1,2-diacyl-sn-glycero-3-phospho-(1D-myo-inositol-3,4,5-trisphosphate) + H2O = a 1,2-diacyl-sn-glycero-3-phospho-(1D-myo-inositol-3,4-bisphosphate) + phosphate. In terms of biological role, has phosphatase activity toward PtdIns(4,5)P2 and PtdIns(3,4,5)P3. In Arabidopsis thaliana (Mouse-ear cress), this protein is Type IV inositol polyphosphate 5-phosphatase 3.